A 734-amino-acid polypeptide reads, in one-letter code: Photosystem I P700 chlorophyll a apoprotein A2 (734 aa).

8 consecutive transmembrane segments (helical) span residues 46–69 (IFAS…FHVA), 135–158 (LYRG…LHLQ), 175–199 (LNHH…HVAI), 273–291 (IAHH…GHMY), 330–353 (LHFQ…QHMY), 369–395 (AALY…IFFI), 417–439 (AIIS…LYVH), and 517–535 (FLVH…LILV). Residues Cys559 and Cys568 each contribute to the [4Fe-4S] cluster site. The next 2 helical transmembrane spans lie at 575–596 (AFYL…YWHW) and 643–665 (LSVW…MFLI). The chlorophyll a site is built by His654, Met662, and Tyr670. A phylloquinone-binding site is contributed by Trp671. A helical membrane pass occupies residues 707–727 (LVGLSHFSVGYIFTYAAFLIA).

It belongs to the PsaA/PsaB family. The PsaA/B heterodimer binds the P700 chlorophyll special pair and subsequent electron acceptors. PSI consists of a core antenna complex that captures photons, and an electron transfer chain that converts photonic excitation into a charge separation. The eukaryotic PSI reaction center is composed of at least 11 subunits. P700 is a chlorophyll a/chlorophyll a' dimer, A0 is one or more chlorophyll a, A1 is one or both phylloquinones and FX is a shared 4Fe-4S iron-sulfur center. is required as a cofactor.

The protein resides in the plastid. Its subcellular location is the chloroplast thylakoid membrane. The enzyme catalyses reduced [plastocyanin] + hnu + oxidized [2Fe-2S]-[ferredoxin] = oxidized [plastocyanin] + reduced [2Fe-2S]-[ferredoxin]. Functionally, psaA and PsaB bind P700, the primary electron donor of photosystem I (PSI), as well as the electron acceptors A0, A1 and FX. PSI is a plastocyanin-ferredoxin oxidoreductase, converting photonic excitation into a charge separation, which transfers an electron from the donor P700 chlorophyll pair to the spectroscopically characterized acceptors A0, A1, FX, FA and FB in turn. Oxidized P700 is reduced on the lumenal side of the thylakoid membrane by plastocyanin. The polypeptide is Photosystem I P700 chlorophyll a apoprotein A2 (Chara vulgaris (Common stonewort)).